Reading from the N-terminus, the 422-residue chain is Putidaredoxin reductase CamA (422 aa).

FAD-binding residues include Ala15, Asp37, Lys50, Val83, and Arg134. 156–165 is an NAD(+) binding site; that stretch reads GGGYIGLEVA. Asp284 and Val302 together coordinate FAD.

It belongs to the FAD-dependent oxidoreductase family. As to quaternary structure, homodimer or monomer. The cofactor is FAD.

The enzyme catalyses 2 reduced [2Fe-2S]-[putidaredoxin] + NAD(+) + H(+) = 2 oxidized [2Fe-2S]-[putidaredoxin] + NADH. Its pathway is terpene metabolism; (R)-camphor degradation. The oxidation of camphor by cytochrome P450-CAM CamC requires the participation of the flavoprotein, putidaredoxin reductase CamA, and the iron-sulfur protein, putidaredoxin CamB, to mediate the transfer of electrons from NADH to P450 for oxygen activation. The sequence is that of Putidaredoxin reductase CamA from Pseudomonas putida (Arthrobacter siderocapsulatus).